The following is a 507-amino-acid chain: Maturase K (507 aa).

It belongs to the intron maturase 2 family. MatK subfamily.

The protein localises to the plastid. The protein resides in the chloroplast. In terms of biological role, usually encoded in the trnK tRNA gene intron. Probably assists in splicing its own and other chloroplast group II introns. This chain is Maturase K, found in Humulus lupulus (European hop).